The chain runs to 316 residues: 4-hydroxyphenylacetate decarboxylase activating enzyme (316 aa).

Residues 20–307 (HDGPGCRTTV…QDIFLDNGIA (288 aa)) enclose the Radical SAM core domain. Residues Cys34, Cys38, Cys41, Cys60, Cys66, Cys69, and Cys105 each coordinate [4Fe-4S] cluster. An S-adenosyl-L-methionine-binding site is contributed by 40-42 (WCA). The 4Fe-4S ferredoxin-type domain occupies 84-115 (NKPVIDWNICKDCESFECVNSCYYNAFKLCAK). S-adenosyl-L-methionine contacts are provided by residues Gly144, 193–195 (DIK), and His267.

The protein belongs to the organic radical-activating enzymes family. Monomer. The cofactor is [4Fe-4S] cluster.

The enzyme catalyses glycyl-[protein] + reduced [flavodoxin] + S-adenosyl-L-methionine = glycin-2-yl radical-[protein] + semiquinone [flavodoxin] + 5'-deoxyadenosine + L-methionine + H(+). Its function is as follows. Catalyzes activation of 4-hydroxyphenylacetate decarboxylase under anaerobic conditions by generation of an organic free radical on a glycine residue, via a homolytic cleavage of S-adenosyl-L-methionine (SAM). The chain is 4-hydroxyphenylacetate decarboxylase activating enzyme from Clostridioides difficile (strain 630) (Peptoclostridium difficile).